The chain runs to 480 residues: Sporozoite surface protein P36p (480 aa).

The first 22 residues, 1-22 (MKRRSIFMYYCFCFLLKYVAFS), serve as a signal peptide directing secretion. 6-Cys domains follow at residues 23–156 (NVPN…FKKM) and 159–298 (KIKG…TSKN). N-linked (GlcNAc...) asparagine glycans are attached at residues asparagine 28, asparagine 40, asparagine 92, asparagine 111, and asparagine 184. Disulfide bonds link cysteine 37/cysteine 49, cysteine 63/cysteine 137, cysteine 80/cysteine 135, cysteine 163/cysteine 187, cysteine 201/cysteine 280, and cysteine 221/cysteine 278. Asparagine 294, asparagine 368, asparagine 375, asparagine 392, asparagine 405, asparagine 409, and asparagine 424 each carry an N-linked (GlcNAc...) asparagine glycan. The tract at residues 358 to 415 (KMDSSDDDESNETESSENESNERTHNGNRANKDANNSEKMTGNRRKKNNSINNTNYYS) is disordered. Positions 362 to 376 (SDDDESNETESSENE) are enriched in acidic residues. Residues 377-393 (SNERTHNGNRANKDANN) show a composition bias toward basic and acidic residues. A compositionally biased stretch (low complexity) spans 406–415 (NSINNTNYYS). Serine 457 carries the GPI-anchor amidated serine lipid modification. The propeptide at 458–480 (SSYYEVFNYFSIAFILIIHMLLL) is removed in mature form.

Its subcellular location is the cell surface. The protein localises to the cell membrane. Involved in sporozoite infection of hepatocytes and replication therein. In Plasmodium yoelii yoelii, this protein is Sporozoite surface protein P36p (P52).